We begin with the raw amino-acid sequence, 86 residues long: Small ribosomal subunit protein uS15 (86 aa).

Belongs to the universal ribosomal protein uS15 family. As to quaternary structure, part of the 30S ribosomal subunit. Forms a bridge to the 50S subunit in the 70S ribosome, contacting the 23S rRNA.

Its function is as follows. One of the primary rRNA binding proteins, it binds directly to 16S rRNA where it helps nucleate assembly of the platform of the 30S subunit by binding and bridging several RNA helices of the 16S rRNA. In terms of biological role, forms an intersubunit bridge (bridge B4) with the 23S rRNA of the 50S subunit in the ribosome. This is Small ribosomal subunit protein uS15 from Mycoplasma genitalium (strain ATCC 33530 / DSM 19775 / NCTC 10195 / G37) (Mycoplasmoides genitalium).